We begin with the raw amino-acid sequence, 200 residues long: NAD(P)H-dependent FMN reductase C4B3.06c (200 aa).

FMN is bound by residues Arg-22, 96–99 (QYNG), and Tyr-126.

As to quaternary structure, homodimer.

It is found in the cytoplasm. The protein localises to the nucleus. It catalyses the reaction FMNH2 + NADP(+) = FMN + NADPH + 2 H(+). The enzyme catalyses FMNH2 + NAD(+) = FMN + NADH + 2 H(+). Its function is as follows. Has several reductase activities that are NAD(P)H-dependent and involve FMN as a cofactor. May be involved in ferric iron assimilation. The polypeptide is NAD(P)H-dependent FMN reductase C4B3.06c (Schizosaccharomyces pombe (strain 972 / ATCC 24843) (Fission yeast)).